The chain runs to 319 residues: NADH-cytochrome b5 reductase 2 (319 aa).

Residues 30–46 (LAPVYLTVGLAGLGVGL) form a helical membrane-spanning segment. The FAD-binding FR-type domain occupies 69-173 (QGWVDLKLSE…KGPLPKYPWE (105 aa)). An FAD-binding site is contributed by 176-211 (KHQHICLIAGGTGITPMYQLARHIFKNPEDKTKVTL).

This sequence belongs to the flavoprotein pyridine nucleotide cytochrome reductase family. Requires FAD as cofactor.

It is found in the mitochondrion outer membrane. The enzyme catalyses 2 Fe(III)-[cytochrome b5] + NADH = 2 Fe(II)-[cytochrome b5] + NAD(+) + H(+). Functionally, may mediate the reduction of outer membrane cytochrome b5. The polypeptide is NADH-cytochrome b5 reductase 2 (mcr1) (Aspergillus terreus (strain NIH 2624 / FGSC A1156)).